A 117-amino-acid chain; its full sequence is Large ribosomal subunit protein bL17 (117 aa).

Belongs to the bacterial ribosomal protein bL17 family. Part of the 50S ribosomal subunit. Contacts protein L32.

This Campylobacter jejuni subsp. jejuni serotype O:6 (strain 81116 / NCTC 11828) protein is Large ribosomal subunit protein bL17.